We begin with the raw amino-acid sequence, 339 residues long: Ketol-acid reductoisomerase (NADP(+)) (339 aa).

Residues 1 to 182 (MRVYYDRDAD…GGGRAGIIET (182 aa)) enclose the KARI N-terminal Rossmann domain. Residues 24 to 27 (YGSQ), Arg48, Ser51, Ser53, and 83 to 86 (DELQ) each bind NADP(+). His108 is a catalytic residue. Gly134 provides a ligand contact to NADP(+). One can recognise a KARI C-terminal knotted domain in the interval 183 to 328 (TFKEECETDL…ARLRDMMPWI (146 aa)). Positions 191, 195, 227, and 231 each coordinate Mg(2+). A substrate-binding site is contributed by Ser252.

Belongs to the ketol-acid reductoisomerase family. Mg(2+) serves as cofactor.

It carries out the reaction (2R)-2,3-dihydroxy-3-methylbutanoate + NADP(+) = (2S)-2-acetolactate + NADPH + H(+). The catalysed reaction is (2R,3R)-2,3-dihydroxy-3-methylpentanoate + NADP(+) = (S)-2-ethyl-2-hydroxy-3-oxobutanoate + NADPH + H(+). Its pathway is amino-acid biosynthesis; L-isoleucine biosynthesis; L-isoleucine from 2-oxobutanoate: step 2/4. The protein operates within amino-acid biosynthesis; L-valine biosynthesis; L-valine from pyruvate: step 2/4. Its function is as follows. Involved in the biosynthesis of branched-chain amino acids (BCAA). Catalyzes an alkyl-migration followed by a ketol-acid reduction of (S)-2-acetolactate (S2AL) to yield (R)-2,3-dihydroxy-isovalerate. In the isomerase reaction, S2AL is rearranged via a Mg-dependent methyl migration to produce 3-hydroxy-3-methyl-2-ketobutyrate (HMKB). In the reductase reaction, this 2-ketoacid undergoes a metal-dependent reduction by NADPH to yield (R)-2,3-dihydroxy-isovalerate. The sequence is that of Ketol-acid reductoisomerase (NADP(+)) from Bradyrhizobium sp. (strain ORS 278).